Reading from the N-terminus, the 115-residue chain is UPF0125 protein VP0646 (115 aa).

The interval 92–115 (RAEQAKAAGNADPVTGGKPNALRK) is disordered.

Belongs to the UPF0125 (RnfH) family.

The polypeptide is UPF0125 protein VP0646 (Vibrio parahaemolyticus serotype O3:K6 (strain RIMD 2210633)).